The following is a 323-amino-acid chain: Lipoyl synthase (323 aa).

The [4Fe-4S] cluster site is built by C56, C61, C67, C82, C86, C89, and S293. The 215-residue stretch at 68–282 (WEDREATFLI…AAEARELGFA (215 aa)) folds into the Radical SAM core domain.

The protein belongs to the radical SAM superfamily. Lipoyl synthase family. Requires [4Fe-4S] cluster as cofactor.

The protein resides in the cytoplasm. It carries out the reaction [[Fe-S] cluster scaffold protein carrying a second [4Fe-4S](2+) cluster] + N(6)-octanoyl-L-lysyl-[protein] + 2 oxidized [2Fe-2S]-[ferredoxin] + 2 S-adenosyl-L-methionine + 4 H(+) = [[Fe-S] cluster scaffold protein] + N(6)-[(R)-dihydrolipoyl]-L-lysyl-[protein] + 4 Fe(3+) + 2 hydrogen sulfide + 2 5'-deoxyadenosine + 2 L-methionine + 2 reduced [2Fe-2S]-[ferredoxin]. It participates in protein modification; protein lipoylation via endogenous pathway; protein N(6)-(lipoyl)lysine from octanoyl-[acyl-carrier-protein]: step 2/2. In terms of biological role, catalyzes the radical-mediated insertion of two sulfur atoms into the C-6 and C-8 positions of the octanoyl moiety bound to the lipoyl domains of lipoate-dependent enzymes, thereby converting the octanoylated domains into lipoylated derivatives. This chain is Lipoyl synthase, found in Acidothermus cellulolyticus (strain ATCC 43068 / DSM 8971 / 11B).